The chain runs to 133 residues: Small ribosomal subunit protein uS8 (133 aa).

This sequence belongs to the universal ribosomal protein uS8 family. As to quaternary structure, part of the 30S ribosomal subunit. Contacts proteins S5 and S12.

One of the primary rRNA binding proteins, it binds directly to 16S rRNA central domain where it helps coordinate assembly of the platform of the 30S subunit. This Prochlorococcus marinus subsp. pastoris (strain CCMP1986 / NIES-2087 / MED4) protein is Small ribosomal subunit protein uS8.